We begin with the raw amino-acid sequence, 215 residues long: A-type ATP synthase subunit E (215 aa).

This sequence belongs to the V-ATPase E subunit family. As to quaternary structure, has multiple subunits with at least A(3), B(3), C, D, E, F, H, I and proteolipid K(x).

Its subcellular location is the cell membrane. In terms of biological role, component of the A-type ATP synthase that produces ATP from ADP in the presence of a proton gradient across the membrane. This chain is A-type ATP synthase subunit E, found in Thermofilum pendens (strain DSM 2475 / Hrk 5).